We begin with the raw amino-acid sequence, 285 residues long: PHO85 cyclin-7 (285 aa).

The segment covering 1 to 14 (MELSSPSKKTTTSP) has biased composition (low complexity). The disordered stretch occupies residues 1-42 (MELSSPSKKTTTSPINIPGGNRDNLIIGPHSHSFKTDPFSSN). At serine 69 the chain carries Phosphoserine.

This sequence belongs to the cyclin family. PHO80 subfamily. Forms a cyclin-CDK complex with PHO85. Interacts with the substrate proteins MMR1 and YJL084C. Interacts with the CDK inhibitor (CKI) PHO81.

The protein localises to the cytoplasm. The PCL7-PHO85 cyclin-CDK is inhibited by PHO81 in low-phosphate conditions. Functionally, cyclin partner of the cyclin-dependent kinase (CDK) PHO85. Together with cyclin PCL6, controls glycogen phosphorylase and glycogen synthase activities in response to nutrient availablility. The PCL7-PHO85 cyclin-CDK holoenzyme has GLC8 kinase activity and phosphorylates and inactivates the phosphatase PP1-2 inhibitor GLC8, causing activation of PP1-2, which then dephosphorylates and activates glycogen phosphorylase. PCL7-PHO85 also phosphorylates MMR1 and YJL084C. In Saccharomyces cerevisiae (strain ATCC 204508 / S288c) (Baker's yeast), this protein is PHO85 cyclin-7 (PCL7).